The chain runs to 980 residues: LRR receptor-like serine/threonine-protein kinase SIK1 (980 aa).

A signal peptide spans 1–24 (MAAARAPWLWWWVVVVVGVAVAEA). Residues 25 to 588 (ASGGGGGGDG…HGQRVNISKT (564 aa)) are Extracellular-facing. 2 N-linked (GlcNAc...) asparagine glycosylation sites follow: Asn-72 and Asn-81. LRR repeat units lie at residues 75-98 (FAVLALNLSNLNLGGEISPAIGEL), 99-122 (KNLQFVDLKGNKLTGQIPDEIGDC), 124-146 (SLKYLDLSGNLLYGDIPFSISKL), 147-170 (KQLEELILKNNQLTGPIPSTLSQI), 171-194 (PNLKTLDLAQNQLTGDIPRLIYWN), 196-218 (VLQYLGLRGNSLTGTLSPDMCQL), 219-242 (TGLWYFDVRGNNLTGTIPESIGNC), 243-265 (TSFEILDISYNQISGEIPYNIGF), 266-289 (LQVATLSLQGNRLTGKIPDVIGLM), 290-312 (QALAVLDLSENELVGPIPSILGN), 314-337 (SYTGKLYLHGNKLTGVIPPELGNM), 338-361 (SKLSYLQLNDNELVGTIPAELGKL), 362-385 (EELFELNLANNNLQGPIPANISSC), 387-408 (ALNKFNVYGNKLNGSIPAGFQK), 409-433 (LESLTYLNLSSNNFKGNIPSELGHI), 435-457 (NLDTLDLSYNEFSGPVPATIGDL), 458-480 (EHLLELNLSKNHLDGPVPAEFGN), 481-505 (LRSVQVIDMSNNNLSGSLPEELGQL), 507-529 (NLDSLILNNNNLVGEIPAQLANC), and 531-554 (SLNNLNLSYNNLSGHVPMAKNFSK). 2 N-linked (GlcNAc...) asparagine glycosylation sites follow: Asn-230 and Asn-241. 2 N-linked (GlcNAc...) asparagine glycosylation sites follow: Asn-312 and Asn-336. N-linked (GlcNAc...) asparagine glycans are attached at residues Asn-381, Asn-399, and Asn-416. 2 N-linked (GlcNAc...) asparagine glycosylation sites follow: Asn-464 and Asn-493. 4 N-linked (GlcNAc...) asparagine glycosylation sites follow: Asn-536, Asn-541, Asn-551, and Asn-584. The helical transmembrane segment at 589-609 (AIACIILGFIILLCVLLLAIY) threads the bilayer. The Cytoplasmic segment spans residues 610–980 (KTNQPQPLVK…FGEVISKHTM (371 aa)). The Protein kinase domain maps to 653–923 (LSEKYIIGYG…EVARVLLSLL (271 aa)). Residues 659 to 667 (IGYGASSTV) and Lys-681 contribute to the ATP site. The Proton acceptor role is filled by Asp-778.

The protein belongs to the protein kinase superfamily. Ser/Thr protein kinase family. In terms of processing, autophosphorylated. In terms of tissue distribution, expressed in nodes, vascular bundles of stems, and anthers.

The protein resides in the cell membrane. The enzyme catalyses L-seryl-[protein] + ATP = O-phospho-L-seryl-[protein] + ADP + H(+). It carries out the reaction L-threonyl-[protein] + ATP = O-phospho-L-threonyl-[protein] + ADP + H(+). Functionally, receptor kinase involved in salt drought stress responses. Acts as a positive regulator of salt and drought tolerance. May promote salt and drought tolerance through the induction of the activities of antioxidative enzymes, such as peroxidase, superoxide dismutase and catalase. May be involved in the control of stomatal development in leaf epidermis. Possesses kinase activity in vitro. Does not seem to be involved in heat tolerance. The protein is LRR receptor-like serine/threonine-protein kinase SIK1 of Oryza sativa subsp. japonica (Rice).